A 345-amino-acid polypeptide reads, in one-letter code: Phenylalanine--tRNA ligase alpha subunit (345 aa).

Glu-259 is a binding site for Mg(2+).

It belongs to the class-II aminoacyl-tRNA synthetase family. Phe-tRNA synthetase alpha subunit type 1 subfamily. As to quaternary structure, tetramer of two alpha and two beta subunits. The cofactor is Mg(2+).

It is found in the cytoplasm. The enzyme catalyses tRNA(Phe) + L-phenylalanine + ATP = L-phenylalanyl-tRNA(Phe) + AMP + diphosphate + H(+). This chain is Phenylalanine--tRNA ligase alpha subunit, found in Lactococcus lactis subsp. cremoris (strain SK11).